The following is a 215-amino-acid chain: Eukaryotic translation initiation factor 4E-1A (215 aa).

Residues M1 to N14 show a composition bias toward low complexity. Residues M1–E23 form a disordered region. MRNA is bound by residues W54–Q55, W100–E101, R155–K160, and T203–S205.

This sequence belongs to the eukaryotic initiation factor 4E family. In terms of assembly, interacts with eif4ebp3l. As to expression, expressed in all tissues examined, including gill, fin, heart, intestine, muscle, ovary and testis.

Its subcellular location is the cytoplasm. It is found in the nucleus. Recognizes and binds the 7-methylguanosine (m7G)-containing mRNA cap during an early step in the initiation of protein synthesis and facilitates ribosome binding by inducing the unwinding of the mRNAs secondary structures. Also promotes export of a subset of mRNAs from the nucleus to the cytoplasm. This is Eukaryotic translation initiation factor 4E-1A from Danio rerio (Zebrafish).